Reading from the N-terminus, the 180-residue chain is ADP-ribosylation factor 4 (180 aa).

Residue Gly2 is the site of N-myristoyl glycine attachment. GTP contacts are provided by residues Gly24 to Thr31, Asp67 to Gln71, and Asn126 to Asp129. Ser147 carries the phosphoserine modification.

Belongs to the small GTPase superfamily. Arf family. As to quaternary structure, forms a complex containing RAB11A, ASAP1, RAB3IP, RAP11FIP3 and ARF4; the complex promotes preciliary trafficking; the complex binds to RHO in photoreceptor cells and promotes RHO ciliary transport.

It localises to the golgi apparatus. Its subcellular location is the membrane. Functionally, GTP-binding protein that functions as an allosteric activator of the cholera toxin catalytic subunit, an ADP-ribosyltransferase. Involved in protein trafficking; may modulate vesicle budding and uncoating within the Golgi apparatus. Part of the ciliary targeting complex containing Rab11, ASAP1, Rabin8/RAB3IP, RAB11FIP3 and ARF4, which direct preciliary vesicle trafficking to mother centriole and ciliogenesis initiation. In Homo sapiens (Human), this protein is ADP-ribosylation factor 4 (ARF4).